We begin with the raw amino-acid sequence, 251 residues long: Triosephosphate isomerase (251 aa).

Position 9-11 (asparagine 9–lysine 11) interacts with substrate. The Electrophile role is filled by histidine 95. Residue glutamate 167 is the Proton acceptor of the active site. Residues glycine 173, serine 212, and glycine 233 to glycine 234 contribute to the substrate site.

It belongs to the triosephosphate isomerase family. Homodimer.

Its subcellular location is the cytoplasm. The catalysed reaction is D-glyceraldehyde 3-phosphate = dihydroxyacetone phosphate. It participates in carbohydrate biosynthesis; gluconeogenesis. It functions in the pathway carbohydrate degradation; glycolysis; D-glyceraldehyde 3-phosphate from glycerone phosphate: step 1/1. Its function is as follows. Involved in the gluconeogenesis. Catalyzes stereospecifically the conversion of dihydroxyacetone phosphate (DHAP) to D-glyceraldehyde-3-phosphate (G3P). The chain is Triosephosphate isomerase from Pseudomonas syringae pv. tomato (strain ATCC BAA-871 / DC3000).